Consider the following 435-residue polypeptide: Polyadenylate-binding protein RBP47B (435 aa).

The span at 1-15 shows a compositional bias: polar residues; sequence MQTTNGSDSTLATSG. Disordered stretches follow at residues 1-41 and 85-104; these read MQTT…QQWM and YGSY…RGSG. Residues 29–41 are compositionally biased toward low complexity; sequence QWQQQQQQQQQWM. 3 RRM domains span residues 108–188, 202–281, and 321–393; these read KTLW…WASF, LSVF…IATP, and ATIF…WGRS. Positions 392–412 are disordered; that stretch reads RSPNKQWRGDSGQQWNGGYSR.

It belongs to the polyadenylate-binding RBP47 family. Interacts with the poly(A) tail of mRNA in nucleus. As to expression, expressed at low levels in leaves, stems, flowers, and seedlings.

The protein resides in the nucleus. Its subcellular location is the cytoplasmic granule. Heterogeneous nuclear ribonucleoprotein (hnRNP)-protein binding the poly(A) tail of mRNA and probably involved in some steps of pre-mRNA maturation. The chain is Polyadenylate-binding protein RBP47B (RBP47B) from Arabidopsis thaliana (Mouse-ear cress).